A 205-amino-acid polypeptide reads, in one-letter code: Large ribosomal subunit protein uL18 (205 aa).

Belongs to the universal ribosomal protein uL18 family. Part of the 50S ribosomal subunit. Contacts the 5S and 23S rRNAs.

Its function is as follows. This is one of the proteins that bind and probably mediate the attachment of the 5S RNA into the large ribosomal subunit, where it forms part of the central protuberance. This is Large ribosomal subunit protein uL18 from Pyrobaculum aerophilum (strain ATCC 51768 / DSM 7523 / JCM 9630 / CIP 104966 / NBRC 100827 / IM2).